Here is a 203-residue protein sequence, read N- to C-terminus: Outer-membrane lipoprotein carrier protein (203 aa).

A signal peptide spans 1–21; that stretch reads MKKLILIGCLMAGMNINVAWA.

The protein belongs to the LolA family. As to quaternary structure, monomer.

The protein resides in the periplasm. Functionally, participates in the translocation of lipoproteins from the inner membrane to the outer membrane. Only forms a complex with a lipoprotein if the residue after the N-terminal Cys is not an aspartate (The Asp acts as a targeting signal to indicate that the lipoprotein should stay in the inner membrane). The polypeptide is Outer-membrane lipoprotein carrier protein (Photorhabdus laumondii subsp. laumondii (strain DSM 15139 / CIP 105565 / TT01) (Photorhabdus luminescens subsp. laumondii)).